Reading from the N-terminus, the 341-residue chain is NADH-quinone oxidoreductase subunit H 1 (341 aa).

9 helical membrane-spanning segments follow: residues 7–27 (IILT…ISLL), 46–66 (PNVV…KYIF), 80–100 (FFLA…VIPF), 111–131 (VAIL…IMGG), 157–177 (LGLI…SHIV), 183–203 (AFGL…LFFI), 244–264 (YIAI…GWLS), 273–293 (VFWM…VKAI), and 305–325 (IGWK…AFLA).

This sequence belongs to the complex I subunit 1 family. NDH-1 is composed of 14 different subunits. Subunits NuoA, H, J, K, L, M, N constitute the membrane sector of the complex.

The protein resides in the cell inner membrane. The catalysed reaction is a quinone + NADH + 5 H(+)(in) = a quinol + NAD(+) + 4 H(+)(out). Functionally, NDH-1 shuttles electrons from NADH, via FMN and iron-sulfur (Fe-S) centers, to quinones in the respiratory chain. The immediate electron acceptor for the enzyme in this species is believed to be ubiquinone. Couples the redox reaction to proton translocation (for every two electrons transferred, four hydrogen ions are translocated across the cytoplasmic membrane), and thus conserves the redox energy in a proton gradient. This subunit may bind ubiquinone. In Cereibacter sphaeroides (strain ATCC 17029 / ATH 2.4.9) (Rhodobacter sphaeroides), this protein is NADH-quinone oxidoreductase subunit H 1.